We begin with the raw amino-acid sequence, 840 residues long: Telomere length regulation protein TEL2 homolog (840 aa).

N-acetylmethionine is present on M1. Hydroxyproline occurs at positions 374, 419, and 422. Residues 443–497 (PEPAGDCSSVSRGPSPAPVDTESPVEMPEKAVESDVPPTQPQGSDSELDSDDEFI) form a disordered region. S457 carries the post-translational modification Phosphoserine. Residue S486 is modified to Phosphoserine; by CK2. A phosphoserine mark is found at S488, S492, and S837. Positions 488-497 (SELDSDDEFI) are enriched in acidic residues.

This sequence belongs to the TEL2 family. In terms of assembly, component of the TTT complex composed of TELO2, TTI1 and TTI2. Interacts with ATM, ATR, MTOR, PRKDC, RUVBL2, TTI1, TTI2, SMG1 and TRRAP. Component of the mTORC1 and mTORC2 complexes. Interacts (phosphorylated form) with PIH1D1. Interaction with PIH1D1 mediates interaction of TELO2 with the R2TP complex composed of RUVBL1, RUVBL2, PIH1D1, and RPAP3. Hydroxylation by PHD3 is required for a proper interaction with ATR, and activation of the ATR/CHK1/p53 pathway following DNA damage. In terms of processing, phosphorylated at Ser-486 by CK2 following growth factor deprivation, leading to its subsequent ubiquitination by the SCF(FBXO9) complex. Phosphorylation by CK2 only takes place when TELO2 is bound to mTORC1, not mTORC2; leading to selective ubiquitination of mTORC1-associated protein. Post-translationally, ubiquitinated by the SCF(FBXO9) complex following phosphorylation by CK2 in response to growth factor deprivation, leading to its degradation by the proteasome. Only mTORC1-associated protein is ubiquitinated and degraded, leading to selective inactivation of mTORC1 to restrain cell growth and protein translation, while mTORC2 is activated due to the relief of feedback inhibition by mTORC1.

The protein resides in the cytoplasm. It localises to the membrane. Its subcellular location is the nucleus. It is found in the chromosome. The protein localises to the telomere. Regulator of the DNA damage response (DDR). Part of the TTT complex that is required to stabilize protein levels of the phosphatidylinositol 3-kinase-related protein kinase (PIKK) family proteins. The TTT complex is involved in the cellular resistance to DNA damage stresses, like ionizing radiation (IR), ultraviolet (UV) and mitomycin C (MMC). Together with the TTT complex and HSP90 may participate in the proper folding of newly synthesized PIKKs. Promotes assembly, stabilizes and maintains the activity of mTORC1 and mTORC2 complexes, which regulate cell growth and survival in response to nutrient and hormonal signals. May be involved in telomere length regulation. The chain is Telomere length regulation protein TEL2 homolog (Telo2) from Mus musculus (Mouse).